Consider the following 101-residue polypeptide: ATP-dependent Clp protease adapter protein ClpS (101 aa).

The protein belongs to the ClpS family. As to quaternary structure, binds to the N-terminal domain of the chaperone ClpA.

Involved in the modulation of the specificity of the ClpAP-mediated ATP-dependent protein degradation. This chain is ATP-dependent Clp protease adapter protein ClpS, found in Mycobacterium bovis (strain ATCC BAA-935 / AF2122/97).